The chain runs to 392 residues: Probable glycerol-3-phosphate dehydrogenase 2 (392 aa).

Residues 42–47, phenylalanine 130, lysine 153, and alanine 196 each bind NAD(+); that span reads GSGNWG. Lysine 153 lines the substrate pocket. Lysine 248 (proton acceptor) is an active-site residue. The NAD(+) site is built by arginine 312 and glutamine 341. 312–313 serves as a coordination point for substrate; it reads RN.

Belongs to the NAD-dependent glycerol-3-phosphate dehydrogenase family. In terms of assembly, homodimer.

It is found in the cytoplasm. It carries out the reaction sn-glycerol 3-phosphate + NAD(+) = dihydroxyacetone phosphate + NADH + H(+). The sequence is that of Probable glycerol-3-phosphate dehydrogenase 2 (gpdh-2) from Caenorhabditis elegans.